A 595-amino-acid chain; its full sequence is UvrABC system protein C (595 aa).

The GIY-YIG domain maps to 14–91; it reads NNPGCYLHKD…IQENMPKFNI (78 aa). A UVR domain is found at 196–231; sequence DKIVNQLKAKMKDMSDQMEFERAAEYRDLIEAVSTL.

It belongs to the UvrC family. As to quaternary structure, interacts with UvrB in an incision complex.

It is found in the cytoplasm. Functionally, the UvrABC repair system catalyzes the recognition and processing of DNA lesions. UvrC both incises the 5' and 3' sides of the lesion. The N-terminal half is responsible for the 3' incision and the C-terminal half is responsible for the 5' incision. This is UvrABC system protein C from Streptococcus thermophilus (strain ATCC BAA-250 / LMG 18311).